The chain runs to 178 residues: 2-oxo-4-hydroxy-4-carboxy-5-ureidoimidazoline decarboxylase (178 aa).

The active-site Proton donor is the H67. Residues P68, 84-88 (SQREQ), and 119-123 (FVLAA) each bind substrate.

It belongs to the OHCU decarboxylase family.

It is found in the peroxisome. It catalyses the reaction 5-hydroxy-2-oxo-4-ureido-2,5-dihydro-1H-imidazole-5-carboxylate + H(+) = (S)-allantoin + CO2. It participates in purine metabolism; urate degradation; (S)-allantoin from urate: step 3/3. Functionally, catalyzes the stereoselective decarboxylation of 2-oxo-4-hydroxy-4-carboxy-5-ureidoimidazoline (OHCU) to (S)-allantoin. This is 2-oxo-4-hydroxy-4-carboxy-5-ureidoimidazoline decarboxylase (Urad) from Mus musculus (Mouse).